We begin with the raw amino-acid sequence, 223 residues long: Deoxyribose-phosphate aldolase (223 aa).

The active-site Proton donor/acceptor is Asp-91. Lys-153 serves as the catalytic Schiff-base intermediate with acetaldehyde. The active-site Proton donor/acceptor is Lys-182.

It belongs to the DeoC/FbaB aldolase family. DeoC type 1 subfamily.

It is found in the cytoplasm. It carries out the reaction 2-deoxy-D-ribose 5-phosphate = D-glyceraldehyde 3-phosphate + acetaldehyde. It participates in carbohydrate degradation; 2-deoxy-D-ribose 1-phosphate degradation; D-glyceraldehyde 3-phosphate and acetaldehyde from 2-deoxy-alpha-D-ribose 1-phosphate: step 2/2. In terms of biological role, catalyzes a reversible aldol reaction between acetaldehyde and D-glyceraldehyde 3-phosphate to generate 2-deoxy-D-ribose 5-phosphate. This chain is Deoxyribose-phosphate aldolase, found in Streptococcus pyogenes serotype M4 (strain MGAS10750).